The sequence spans 126 residues: UPF0102 protein MXAN_3551 (126 aa).

This sequence belongs to the UPF0102 family.

The polypeptide is UPF0102 protein MXAN_3551 (Myxococcus xanthus (strain DK1622)).